The chain runs to 387 residues: Exodeoxyribonuclease 7 large subunit (387 aa).

This sequence belongs to the XseA family. Heterooligomer composed of large and small subunits.

It localises to the cytoplasm. The catalysed reaction is Exonucleolytic cleavage in either 5'- to 3'- or 3'- to 5'-direction to yield nucleoside 5'-phosphates.. Bidirectionally degrades single-stranded DNA into large acid-insoluble oligonucleotides, which are then degraded further into small acid-soluble oligonucleotides. This chain is Exodeoxyribonuclease 7 large subunit, found in Parasynechococcus marenigrum (strain WH8102).